Reading from the N-terminus, the 222-residue chain is 7-cyano-7-deazaguanine synthase (222 aa).

Residue 11–21 (FSGGQDSTTCL) participates in ATP binding. Positions 187, 195, 198, and 201 each coordinate Zn(2+).

It belongs to the QueC family. Zn(2+) serves as cofactor.

It catalyses the reaction 7-carboxy-7-deazaguanine + NH4(+) + ATP = 7-cyano-7-deazaguanine + ADP + phosphate + H2O + H(+). It functions in the pathway purine metabolism; 7-cyano-7-deazaguanine biosynthesis. In terms of biological role, catalyzes the ATP-dependent conversion of 7-carboxy-7-deazaguanine (CDG) to 7-cyano-7-deazaguanine (preQ(0)). The polypeptide is 7-cyano-7-deazaguanine synthase (Actinobacillus pleuropneumoniae serotype 5b (strain L20)).